A 246-amino-acid polypeptide reads, in one-letter code: Probable H/ACA ribonucleoprotein complex subunit 1-like protein (246 aa).

2 disordered regions span residues 1–61 (MSFR…GGYD) and 155–246 (PQVG…TKFD). RGG-box stretches follow at residues 4–59 (RGGR…GRGG) and 161–223 (RGRG…RGRG). Over residues 168 to 180 (RGGDRGRGGDRGR) the composition is skewed to basic and acidic residues. Gly residues predominate over residues 181 to 221 (GGFGGRGGGGGGFRGGSRGGFGGGDRGGFRGGRGGDFGGRG).

It belongs to the GAR1 family. Component of the small nucleolar ribonucleoprotein particle containing H/ACA-type snoRNAs (H/ACA snoRNPs).

It localises to the nucleus. The protein localises to the nucleolus. Required for ribosome biogenesis. Part of a complex which catalyzes pseudouridylation of rRNA. This involves the isomerization of uridine such that the ribose is subsequently attached to C5, instead of the normal N1. Pseudouridine ('psi') residues may serve to stabilize the conformation of rRNAs. The chain is Probable H/ACA ribonucleoprotein complex subunit 1-like protein from Caenorhabditis briggsae.